The sequence spans 199 residues: Fe/S biogenesis protein NfuA (199 aa).

[4Fe-4S] cluster-binding residues include Cys151 and Cys154.

Belongs to the NfuA family. As to quaternary structure, homodimer. [4Fe-4S] cluster is required as a cofactor.

Its function is as follows. Involved in iron-sulfur cluster biogenesis. Binds a 4Fe-4S cluster, can transfer this cluster to apoproteins, and thereby intervenes in the maturation of Fe/S proteins. Could also act as a scaffold/chaperone for damaged Fe/S proteins. The polypeptide is Fe/S biogenesis protein NfuA (Xanthomonas euvesicatoria pv. vesicatoria (strain 85-10) (Xanthomonas campestris pv. vesicatoria)).